Reading from the N-terminus, the 377-residue chain is Succinyl-diaminopimelate desuccinylase (377 aa).

His-66 lines the Zn(2+) pocket. The active site involves Asp-68. Asp-99 provides a ligand contact to Zn(2+). Glu-133 functions as the Proton acceptor in the catalytic mechanism. Zn(2+) is bound by residues Glu-134, Glu-162, and His-348.

This sequence belongs to the peptidase M20A family. DapE subfamily. As to quaternary structure, homodimer. Requires Zn(2+) as cofactor. Co(2+) is required as a cofactor.

It catalyses the reaction N-succinyl-(2S,6S)-2,6-diaminopimelate + H2O = (2S,6S)-2,6-diaminopimelate + succinate. The protein operates within amino-acid biosynthesis; L-lysine biosynthesis via DAP pathway; LL-2,6-diaminopimelate from (S)-tetrahydrodipicolinate (succinylase route): step 3/3. Its function is as follows. Catalyzes the hydrolysis of N-succinyl-L,L-diaminopimelic acid (SDAP), forming succinate and LL-2,6-diaminopimelate (DAP), an intermediate involved in the bacterial biosynthesis of lysine and meso-diaminopimelic acid, an essential component of bacterial cell walls. The sequence is that of Succinyl-diaminopimelate desuccinylase from Chromobacterium violaceum (strain ATCC 12472 / DSM 30191 / JCM 1249 / CCUG 213 / NBRC 12614 / NCIMB 9131 / NCTC 9757 / MK).